Consider the following 239-residue polypeptide: MPLGHIMRLDLEKIALEYIVPCLHEVGFCYLDNFLGEVVGDCVLERVKQLHYNGALRDGQLAGPRAGVSKRHLRGDQITWIGGNEEGCEAINFLLSLIDRLVLYCGSRLGKYYVKERSKAMVACYPGNGTGYVRHVDNPNGDGRCITCIYYLNKNWDAKLHGGVLRIFPEGKSFVADVEPIFDRLLFFWSDRRNPHEVQPSYATRYAMTVWYFDAEERAEAKKKFRNLTRKTESALAKD.

Residues 62–73 form a beta(2)beta(3) 'finger-like' loop region; the sequence is AGPRAGVSKRHL. The interval 88–104 is required for interaction with ADRB2; the sequence is CEAINFLLSLIDRLVLY. Positions 116–214 constitute a Fe2OG dioxygenase domain; sequence ERSKAMVACY…RYAMTVWYFD (99 aa). Residues His135, Asp137, and His196 each contribute to the Fe cation site. Arg205 contacts 2-oxoglutarate.

In terms of assembly, interacts with ADRB2; the interaction hydroxylates ADRB2 facilitating its ubiquitination by the VHL-E3 ligase complex. Interacts with PKM; the interaction hydroxylates PKM in hypoxia. Interacts with WDR83; the interaction leads to almost complete elimination of HIF-mediated reporter activity. Interacts with BCL2 (via its BH4 domain); the interaction disrupts the BAX-BCL4 complex inhibiting the anti-apoptotic activity of BCL2. Interacts with LIMD1, WTIP and AJUBA. Fe(2+) serves as cofactor. Requires L-ascorbate as cofactor. In terms of processing, ubiquitinated by SIAH1 and/or SIAH2 in response to the unfolded protein response (UPR), leading to its degradation. As to expression, highly expressed in cardiac and smooth muscle. Also high expression in brain, skeletal muscle and kidney. Low levels in lung.

It is found in the nucleus. The protein localises to the cytoplasm. It catalyses the reaction L-prolyl-[protein] + 2-oxoglutarate + O2 = trans-4-hydroxy-L-prolyl-[protein] + succinate + CO2. It carries out the reaction L-prolyl-[hypoxia-inducible factor alpha subunit] + 2-oxoglutarate + O2 = trans-4-hydroxy-L-prolyl-[hypoxia-inducible factor alpha subunit] + succinate + CO2. Prolyl hydroxylase that mediates hydroxylation of proline residues in target proteins, such as PKM, TELO2, ATF4 and HIF1A. Target proteins are preferentially recognized via a LXXLAP motif. Cellular oxygen sensor that catalyzes, under normoxic conditions, the post-translational formation of 4-hydroxyproline in hypoxia-inducible factor (HIF) alpha proteins. Hydroxylates a specific proline found in each of the oxygen-dependent degradation (ODD) domains (N-terminal, NODD, and C-terminal, CODD) of HIF1A. Also hydroxylates HIF2A. Has a preference for the CODD site for both HIF1A and HIF2A. Hydroxylation on the NODD site by EGLN3 appears to require prior hydroxylation on the CODD site. Hydroxylated HIFs are then targeted for proteasomal degradation via the von Hippel-Lindau ubiquitination complex. Under hypoxic conditions, the hydroxylation reaction is attenuated allowing HIFs to escape degradation resulting in their translocation to the nucleus, heterodimerization with HIF1B, and increased expression of hypoxy-inducible genes. ELGN3 is the most important isozyme in limiting physiological activation of HIFs (particularly HIF2A) in hypoxia. Also hydroxylates PKM in hypoxia, limiting glycolysis. Under normoxia, hydroxylates and regulates the stability of ADRB2. Regulator of cardiomyocyte and neuronal apoptosis. In cardiomyocytes, inhibits the anti-apoptotic effect of BCL2 by disrupting the BAX-BCL2 complex. In neurons, has a NGF-induced proapoptotic effect, probably through regulating CASP3 activity. Also essential for hypoxic regulation of neutrophilic inflammation. Plays a crucial role in DNA damage response (DDR) by hydroxylating TELO2, promoting its interaction with ATR which is required for activation of the ATR/CHK1/p53 pathway. Also mediates hydroxylation of ATF4, leading to decreased protein stability of ATF4. This is Prolyl hydroxylase EGLN3 from Mus musculus (Mouse).